Consider the following 252-residue polypeptide: MTFLEEILAQKAVEVADMPLEKVAEKRKTYSFYEFLKANTSTMQLIAEVKRASPSKGEINMGVNPVLQAKSYQAAGAGMISVLTDPVFFKGSIEDLREVAKNVEIPVLCKDFIISEKQLIRARNAGATVVLLIISALTEEMLIALFEQALALDLEVLVEVHDQKELAVAQKIGAKLIGVNNRNLHTFEVDIAVSERLASDFSSDACFISESGFRTAEDVARVSQKYNAVLVGEALMREATPEAAAKSLKVTR.

Belongs to the TrpC family.

It catalyses the reaction 1-(2-carboxyphenylamino)-1-deoxy-D-ribulose 5-phosphate + H(+) = (1S,2R)-1-C-(indol-3-yl)glycerol 3-phosphate + CO2 + H2O. It participates in amino-acid biosynthesis; L-tryptophan biosynthesis; L-tryptophan from chorismate: step 4/5. The sequence is that of Indole-3-glycerol phosphate synthase from Listeria monocytogenes serotype 4b (strain CLIP80459).